Consider the following 249-residue polypeptide: Putative [LysW]-aminoadipate/[LysW]-glutamate kinase (249 aa).

Substrate-binding residues include Arg-64 and Asn-166.

This sequence belongs to the acetylglutamate kinase family. LysZ subfamily.

It localises to the cytoplasm. It carries out the reaction [amino-group carrier protein]-C-terminal-N-(1,4-dicarboxybutan-1-yl)-L-glutamine + ATP = [amino-group carrier protein]-C-terminal-N-(1-carboxy-5-phosphooxy-5-oxopentan-1-yl)-L-glutamine + ADP. The catalysed reaction is [amino-group carrier protein]-C-terminal-gamma-(L-glutamyl)-L-glutamate + ATP = [amino-group carrier protein]-C-terminal-gamma-(5-phospho-L-glutamyl)-L-glutamate + ADP. It functions in the pathway amino-acid biosynthesis; L-lysine biosynthesis via AAA pathway; L-lysine from L-alpha-aminoadipate (Thermus route): step 2/5. It participates in amino-acid biosynthesis; L-arginine biosynthesis. In terms of biological role, involved in both the arginine and lysine biosynthetic pathways. Phosphorylates the LysW-bound precursors glutamate (for arginine biosynthesis), respectively alpha-aminoadipate (for lysine biosynthesis). The protein is Putative [LysW]-aminoadipate/[LysW]-glutamate kinase of Pyrococcus horikoshii (strain ATCC 700860 / DSM 12428 / JCM 9974 / NBRC 100139 / OT-3).